Consider the following 403-residue polypeptide: Phosphoglycerate kinase (403 aa).

Substrate is bound by residues 21–23 (DFN), R36, 59–62 (HLGR), R119, and R154. Residues K207, G299, E330, and 357-360 (GGDA) contribute to the ATP site.

Belongs to the phosphoglycerate kinase family. As to quaternary structure, monomer.

The protein resides in the cytoplasm. It catalyses the reaction (2R)-3-phosphoglycerate + ATP = (2R)-3-phospho-glyceroyl phosphate + ADP. The protein operates within carbohydrate degradation; glycolysis; pyruvate from D-glyceraldehyde 3-phosphate: step 2/5. The sequence is that of Phosphoglycerate kinase from Chlamydia abortus (strain DSM 27085 / S26/3) (Chlamydophila abortus).